Here is a 560-residue protein sequence, read N- to C-terminus: Dihydroxy-acid dehydratase (560 aa).

Cys-50 is a [2Fe-2S] cluster binding site. Asp-82 contributes to the Mg(2+) binding site. Residue Cys-123 participates in [2Fe-2S] cluster binding. Mg(2+) contacts are provided by Asp-124 and Lys-125. Lys-125 bears the N6-carboxylysine mark. Cys-195 is a [2Fe-2S] cluster binding site. Glu-447 contacts Mg(2+). Catalysis depends on Ser-473, which acts as the Proton acceptor.

Belongs to the IlvD/Edd family. As to quaternary structure, homodimer. The cofactor is [2Fe-2S] cluster. Requires Mg(2+) as cofactor.

The catalysed reaction is (2R)-2,3-dihydroxy-3-methylbutanoate = 3-methyl-2-oxobutanoate + H2O. The enzyme catalyses (2R,3R)-2,3-dihydroxy-3-methylpentanoate = (S)-3-methyl-2-oxopentanoate + H2O. The protein operates within amino-acid biosynthesis; L-isoleucine biosynthesis; L-isoleucine from 2-oxobutanoate: step 3/4. Its pathway is amino-acid biosynthesis; L-valine biosynthesis; L-valine from pyruvate: step 3/4. Functions in the biosynthesis of branched-chain amino acids. Catalyzes the dehydration of (2R,3R)-2,3-dihydroxy-3-methylpentanoate (2,3-dihydroxy-3-methylvalerate) into 2-oxo-3-methylpentanoate (2-oxo-3-methylvalerate) and of (2R)-2,3-dihydroxy-3-methylbutanoate (2,3-dihydroxyisovalerate) into 2-oxo-3-methylbutanoate (2-oxoisovalerate), the penultimate precursor to L-isoleucine and L-valine, respectively. The sequence is that of Dihydroxy-acid dehydratase from Thermosynechococcus vestitus (strain NIES-2133 / IAM M-273 / BP-1).